The primary structure comprises 930 residues: Zn(2)-C6 fungal-type transcription factor FTF1c (930 aa).

The zn(2)-C6 fungal-type DNA-binding region spans 137 to 164 (CIACRRKKIRCSGEKPACEHCLCSYIPC).

It localises to the nucleus. Zn(2)-C6 fungal-type transcription factor that has a role in the establishment of the fungus within the plant and/or the progress of the disease. Regulates the expression of virulence factors such as SIX1 and SIX6. This Fusarium oxysporum f. sp. lycopersici (strain 4287 / CBS 123668 / FGSC 9935 / NRRL 34936) (Fusarium vascular wilt of tomato) protein is Zn(2)-C6 fungal-type transcription factor FTF1c.